Consider the following 204-residue polypeptide: Large ribosomal subunit protein eL15y (204 aa).

Residues 162-204 form a disordered region; the sequence is RGLTSEGKKNRGLRGKGHNNHKNRPSRRATWKKNNSISLRRYR. Residues 171-192 show a composition bias toward basic residues; that stretch reads NRGLRGKGHNNHKNRPSRRATW. Over residues 193–204 the composition is skewed to polar residues; the sequence is KKNNSISLRRYR.

The protein belongs to the eukaryotic ribosomal protein eL15 family.

This Arabidopsis thaliana (Mouse-ear cress) protein is Large ribosomal subunit protein eL15y (RPL15B).